The primary structure comprises 422 residues: Probable Na(+)/H(+) antiporter 2 (422 aa).

The next 13 membrane-spanning stretches (helical) occupy residues 3–23 (IVLF…IAKI), 28–48 (GIPD…LNVI), 52–72 (IVES…LFIG), 93–113 (ILAL…VFHL), 119–139 (IGLL…IPIF), 157–177 (VFND…LGLA), 183–203 (ILEF…AGKF), 216–236 (YIAP…EGIF), 242–262 (YEIS…NVIV), 281–301 (LSIF…SIPL), 307–327 (LPAF…GVLI), 341–361 (IYLA…AMVY), and 384–404 (LAGT…VLEA).

It belongs to the monovalent cation:proton antiporter 1 (CPA1) transporter (TC 2.A.36) family.

Its subcellular location is the cell membrane. Functionally, this is probably a Na(+)/H(+) antiporter. The chain is Probable Na(+)/H(+) antiporter 2 from Methanocaldococcus jannaschii (strain ATCC 43067 / DSM 2661 / JAL-1 / JCM 10045 / NBRC 100440) (Methanococcus jannaschii).